The chain runs to 185 residues: uncharacterized protein (185 aa).

A G domain is found at 17 to 137; sequence GKSSIMNALF…QKPIIVVINK (121 aa).

This is an uncharacterized protein from Methanocaldococcus jannaschii (strain ATCC 43067 / DSM 2661 / JAL-1 / JCM 10045 / NBRC 100440) (Methanococcus jannaschii).